A 638-amino-acid polypeptide reads, in one-letter code: MNQLLSKSFKPLVVAGVAVIGISAFSGNRAYDEYRKERESISKKMINDLNENKITMFDYFQECKTLGRDEQLSKLNKLSKVYNKQKLNEQENQEELIDLDLIVIGGGATGTGVALDAQSRGMKVALFEKYDFSSGTSSKSTKLVHGGIRYLESAIMKLKPSELTLVKEALRERSNLLNNAPHLSRQLPIVIPAYSIFDASKFWIGCKLYDFFYPFNDIPKSYLQTSAQTYKEFPFLREGLVSSVVYYDGQHNDSRMNVSLALTAAQQGALTLNYTEVVELIKDDKINNNNKQQQLKGVVIRDRLTGKKYSVPAKCVVNATGPYCDSIRNLDDPRADPIITASSGVHIMLPGNLIPSDKGFLNPKTKDGRVLFILPFEGKTLVGTTDDPSPIIENPQPLEKDVEFILDSIKEYSNPNVKLDKSQVLACWSGIRPLVSDEPAAQGDNKKSTSQVTRSHSLRMSESGLITIVGGKWTTYRSMAEATVNLVCSKHDIFTPKGCITKNLPLIGGEKYYNTLNQYLIKNFNLPEDIAEHLAHSYGDQAPFVAKLANENGSNKRLVEGYPYIEAEVTYGVKKEYACTAEDIIGRRTRLSFLDHDKAEIALPKIINIMAPLLKWSNERKKEELKNSQNYLKTMTSK.

Asp-100–Glu-128 contacts FAD.

Belongs to the FAD-dependent glycerol-3-phosphate dehydrogenase family. The cofactor is FAD.

Its subcellular location is the mitochondrion. It carries out the reaction a quinone + sn-glycerol 3-phosphate = dihydroxyacetone phosphate + a quinol. The protein operates within polyol metabolism; glycerol degradation via glycerol kinase pathway; glycerone phosphate from sn-glycerol 3-phosphate (anaerobic route): step 1/1. The polypeptide is Probable glycerol-3-phosphate dehydrogenase, mitochondrial (Dictyostelium discoideum (Social amoeba)).